The sequence spans 330 residues: tRNA-modifying protein YgfZ (330 aa).

The folate site is built by W28 and W192.

This sequence belongs to the tRNA-modifying YgfZ family.

The protein resides in the cytoplasm. Functionally, folate-binding protein involved in regulating the level of ATP-DnaA and in the modification of some tRNAs. It is probably a key factor in regulatory networks that act via tRNA modification, such as initiation of chromosomal replication. This is tRNA-modifying protein YgfZ from Blochmanniella pennsylvanica (strain BPEN).